We begin with the raw amino-acid sequence, 533 residues long: MKERERVLELVKKGILTSEEALILLENMATEKDEKQIEKAAEKVDTQNIGTTNKEDQVADLMNALEKGESEGPTVDSFEENTQDSAEKDRENLERILDELATKANRASAELDEVNAEIAGIKEEIKEVAEEIGTLDTKEELDALTEDEQVQRKDLHVLLAQLEEKLATQSTEKTALEEELKNIRKEQWKGQWNDTKEKVSSQFSEEWKDQATDTFNQVGGKVAEVGGQVGEFLKKTFNSFSDTMNDNVEWKDIKMKVPGVATTKFEHEFNYPNPQASLIDVKVANGTVVFKTWDQEDVKVEAKIKLYGKMAGDSPMEAFLERSDIDVDDETISFQVPNKRVKADLTFYLPKRTYDHVSVKLLNGNVLVEELTAKDVYTKSTNGTITFKKIDATMLEIEGVNGEIKVLEGTILDNIIETVNGDVSISAAPESLSVSLINGDIRITAKEKTLRRVEASSANGNIKLALPNDLGVEGQVKTNLGSINSRLTDIEVVREKKDRGNQQLHFRRVLEESMAQINASTTTGSIFLKDTDK.

Positions 1 to 277 are binds the antibiotic daptomycin (DAP) and the antimicrobial peptide human LL-37, under physiologically relevant concentrations. Protects the OG1RF and S613 strains from LL-37-mediated killing in a concentration-dependent manner; the sequence is MKERERVLEL…EFNYPNPQAS (277 aa). The interval 63–89 is disordered; the sequence is NALEKGESEGPTVDSFEENTQDSAEKD. Positions 83–186 form a coiled coil; it reads QDSAEKDREN…EEELKNIRKE (104 aa). Residues 279 to 526 form a putative adhesin region region; that stretch reads IDVKVANGTV…INASTTTGSI (248 aa). Residues 289–526 form an involved in cell membrane remodeling region; that stretch reads VFKTWDQEDV…INASTTTGSI (238 aa).

In terms of processing, may undergo proteolytic cleavage, allowing release of the N-terminal region into the extracellular environment.

It localises to the secreted. The protein localises to the cell wall. The protein resides in the cell membrane. In terms of biological role, involved in cell membrane remodeling, perhaps acting by negative modulation of the liaFSR and liaXYZ gene clusters, thereby regulating content and localization of anionic phospholipids. Binds to the antibiotic daptomycin (DAP) and to cationic antimicrobial peptides, such as human LL-37, perhaps functioning as a sensor that activates the cell envelope stress response. The chain is Putative adhesin domain-containing protein LiaX from Enterococcus faecalis (strain ATCC 700802 / V583).